The primary structure comprises 159 residues: Cyclic pyranopterin monophosphate synthase (159 aa).

Substrate is bound by residues 75–77 and 113–114; these read LCH and ME. The active site involves Asp-128.

The protein belongs to the MoaC family. In terms of assembly, homohexamer; trimer of dimers.

It catalyses the reaction (8S)-3',8-cyclo-7,8-dihydroguanosine 5'-triphosphate = cyclic pyranopterin phosphate + diphosphate. It functions in the pathway cofactor biosynthesis; molybdopterin biosynthesis. In terms of biological role, catalyzes the conversion of (8S)-3',8-cyclo-7,8-dihydroguanosine 5'-triphosphate to cyclic pyranopterin monophosphate (cPMP). The polypeptide is Cyclic pyranopterin monophosphate synthase (Cereibacter sphaeroides (strain ATCC 17029 / ATH 2.4.9) (Rhodobacter sphaeroides)).